The following is a 73-amino-acid chain: U-scoloptoxin(15)-Sa1a (73 aa).

The N-terminal stretch at 1–20 (MKFHIIFCLLAALMMTSAFA) is a signal peptide.

Belongs to the scoloptoxin-15 family. In terms of processing, contains 2 disulfide bonds. Expressed by the venom gland.

The protein resides in the secreted. This Scolopendra alternans (Florida Keys giant centipede) protein is U-scoloptoxin(15)-Sa1a.